The chain runs to 66 residues: Neurotoxin Cex11 (66 aa).

The 64-residue stretch at 1–64 (KEGYPVNIYT…SYPYPEKSCG (64 aa)) folds into the LCN-type CS-alpha/beta domain. Disulfide bonds link Cys-12-Cys-63, Cys-16-Cys-39, Cys-25-Cys-44, and Cys-29-Cys-46. Cys-63 is subject to Cysteine amide. A propeptide spanning residues 64 to 66 (GRK) is cleaved from the precursor.

The protein belongs to the long (4 C-C) scorpion toxin superfamily. Sodium channel inhibitor family. Beta subfamily. In terms of tissue distribution, expressed by the venom gland.

Its subcellular location is the secreted. Its function is as follows. Beta toxins bind voltage-independently at site-4 of sodium channels (Nav) and shift the voltage of activation toward more negative potentials thereby affecting sodium channel activation and promoting spontaneous and repetitive firing. The sequence is that of Neurotoxin Cex11 from Centruroides exilicauda (Bark scorpion).